The following is a 267-amino-acid chain: 2-keto-3-deoxy-L-rhamnonate aldolase (267 aa).

The active-site Proton acceptor is the His-49. Gln-151 is a binding site for substrate. Glu-153 lines the Mg(2+) pocket. Substrate is bound by residues Ala-178 and Asp-179. Asp-179 serves as a coordination point for Mg(2+).

The protein belongs to the HpcH/HpaI aldolase family. KDR aldolase subfamily. In terms of assembly, homohexamer. The cofactor is Mg(2+).

It catalyses the reaction 2-dehydro-3-deoxy-L-rhamnonate = (S)-lactaldehyde + pyruvate. Its function is as follows. Catalyzes the reversible retro-aldol cleavage of 2-keto-3-deoxy-L-rhamnonate (KDR) to pyruvate and lactaldehyde. This is 2-keto-3-deoxy-L-rhamnonate aldolase from Salmonella enteritidis PT4 (strain P125109).